Here is a 277-residue protein sequence, read N- to C-terminus: tRNA (guanine-N(7)-)-methyltransferase (277 aa).

Residues 1 to 37 (MAGTETGDAAGTEAPQPQKRYYRQRAHSNPMADHTLR) form a disordered region. Ser28 is modified (phosphoserine). S-adenosyl-L-methionine-binding residues include Gly85, Glu108, Arg110, Asn141, Ala142, and Leu161. The active site involves Asp164. The interval 165-173 (PHFKRTKHK) is alphaC helix. Residues Thr239 and Glu241 each coordinate S-adenosyl-L-methionine. The alpha6 helix stretch occupies residues 239–247 (TEEGKKVLR).

It belongs to the class I-like SAM-binding methyltransferase superfamily. TrmB family. In terms of assembly, catalytic component of the METTL1-WDR4 complex, composed of METTL1 and WDR4. Post-translationally, phosphorylation at Ser-28 by PKB/AKT1 inactivates its methyltransferase activity via a steric interference mechanism in the active site that locally disrupts the catalytic center. Phosphorylation at Ser-28 does not affect the interaction with WDR4.

It localises to the nucleus. The catalysed reaction is guanosine(46) in tRNA + S-adenosyl-L-methionine = N(7)-methylguanosine(46) in tRNA + S-adenosyl-L-homocysteine. It carries out the reaction a guanosine in mRNA + S-adenosyl-L-methionine = an N(7)-methylguanosine in mRNA + S-adenosyl-L-homocysteine. It catalyses the reaction a guanosine in miRNA + S-adenosyl-L-methionine = an N(7)-methylguanosine in miRNA + S-adenosyl-L-homocysteine. It functions in the pathway tRNA modification; N(7)-methylguanine-tRNA biosynthesis. In terms of biological role, catalytic component of METTL1-WDR4 methyltransferase complex that mediates the formation of N(7)-methylguanine in a subset of RNA species, such as tRNAs, mRNAs and microRNAs (miRNAs). Catalyzes the formation of N(7)-methylguanine at position 46 (m7G46) in a large subset of tRNAs that contain the 5'-RAGGU-3' motif within the variable loop. M7G46 interacts with C13-G22 in the D-loop to stabilize tRNA tertiary structure and protect tRNAs from decay. Also acts as a methyltransferase for a subset of internal N(7)-methylguanine in mRNAs. Internal N(7)-methylguanine methylation of mRNAs in response to stress promotes their relocalization to stress granules, thereby suppressing their translation. Also methylates a specific subset of miRNAs, such as let-7. N(7)-methylguanine methylation of let-7 miRNA promotes let-7 miRNA processing by disrupting an inhibitory secondary structure within the primary miRNA transcript (pri-miRNA). Acts as a regulator of embryonic stem cell self-renewal and differentiation. The polypeptide is tRNA (guanine-N(7)-)-methyltransferase (Bos taurus (Bovine)).